The following is a 171-amino-acid chain: RxLR effector protein CRE7 (171 aa).

The first 23 residues, 1–23 (MRAIAILLAVVATIFASLHGVSA), serve as a signal peptide directing secretion. A RxLR-dEER motif is present at residues 46–59 (RRLRQTGDASDEER).

It belongs to the RxLR effector family.

Its subcellular location is the secreted. The protein localises to the host cell. Its function is as follows. Effector that is involved in host plant infection. Contributes to virulence during the early infection stage, by inhibiting plant defense responses induced by both PAMP-triggered immunity (PTI) and effector-triggered immunity (ETI). The protein is RxLR effector protein CRE7 of Phytophthora infestans (strain T30-4) (Potato late blight agent).